Reading from the N-terminus, the 176-residue chain is Large ribosomal subunit protein uL6 (176 aa).

Belongs to the universal ribosomal protein uL6 family. In terms of assembly, part of the 50S ribosomal subunit.

Functionally, this protein binds to the 23S rRNA, and is important in its secondary structure. It is located near the subunit interface in the base of the L7/L12 stalk, and near the tRNA binding site of the peptidyltransferase center. The sequence is that of Large ribosomal subunit protein uL6 from Burkholderia ambifaria (strain MC40-6).